We begin with the raw amino-acid sequence, 88 residues long: Small ribosomal subunit protein bS20 (88 aa).

Positions 1–25 (MANTAQALKRIRQTNKARAQNASQR) are disordered. Positions 16–25 (KARAQNASQR) are enriched in polar residues.

It belongs to the bacterial ribosomal protein bS20 family.

In terms of biological role, binds directly to 16S ribosomal RNA. This chain is Small ribosomal subunit protein bS20, found in Dichelobacter nodosus (strain VCS1703A).